The sequence spans 362 residues: Phosphoserine aminotransferase (362 aa).

Arginine 43 contacts L-glutamate. Pyridoxal 5'-phosphate is bound by residues 77–78 (AS), tryptophan 103, threonine 153, aspartate 173, and glutamine 196. N6-(pyridoxal phosphate)lysine is present on lysine 197. 238 to 239 (NT) serves as a coordination point for pyridoxal 5'-phosphate.

The protein belongs to the class-V pyridoxal-phosphate-dependent aminotransferase family. SerC subfamily. As to quaternary structure, homodimer. Pyridoxal 5'-phosphate serves as cofactor.

Its subcellular location is the cytoplasm. It carries out the reaction O-phospho-L-serine + 2-oxoglutarate = 3-phosphooxypyruvate + L-glutamate. It catalyses the reaction 4-(phosphooxy)-L-threonine + 2-oxoglutarate = (R)-3-hydroxy-2-oxo-4-phosphooxybutanoate + L-glutamate. It participates in amino-acid biosynthesis; L-serine biosynthesis; L-serine from 3-phospho-D-glycerate: step 2/3. In terms of biological role, catalyzes the reversible conversion of 3-phosphohydroxypyruvate to phosphoserine and of 3-hydroxy-2-oxo-4-phosphonooxybutanoate to phosphohydroxythreonine. In Lysinibacillus sphaericus (strain C3-41), this protein is Phosphoserine aminotransferase.